Consider the following 188-residue polypeptide: Protein GrpE (188 aa).

The segment at 1–30 (MTKKTSHHKAEQKEKRAGEESGRESEVLDH) is disordered. A compositionally biased stretch (basic and acidic residues) spans 8–30 (HKAEQKEKRAGEESGRESEVLDH).

Belongs to the GrpE family. In terms of assembly, homodimer.

The protein localises to the cytoplasm. Its function is as follows. Participates actively in the response to hyperosmotic and heat shock by preventing the aggregation of stress-denatured proteins, in association with DnaK and GrpE. It is the nucleotide exchange factor for DnaK and may function as a thermosensor. Unfolded proteins bind initially to DnaJ; upon interaction with the DnaJ-bound protein, DnaK hydrolyzes its bound ATP, resulting in the formation of a stable complex. GrpE releases ADP from DnaK; ATP binding to DnaK triggers the release of the substrate protein, thus completing the reaction cycle. Several rounds of ATP-dependent interactions between DnaJ, DnaK and GrpE are required for fully efficient folding. This chain is Protein GrpE, found in Chlorobium phaeobacteroides (strain BS1).